Here is a 445-residue protein sequence, read N- to C-terminus: Xylose isomerase (445 aa).

Active-site residues include His107 and Asp110. Mg(2+) contacts are provided by Glu238, Glu274, His277, Asp302, Asp313, Asp315, and Asp345.

Belongs to the xylose isomerase family. Homotetramer. It depends on Mg(2+) as a cofactor.

The protein localises to the cytoplasm. The enzyme catalyses alpha-D-xylose = alpha-D-xylulofuranose. The sequence is that of Xylose isomerase from Bacillus cereus (strain ATCC 10987 / NRS 248).